Consider the following 587-residue polypeptide: Mitogen-activated protein kinase 4 (587 aa).

The Protein kinase domain occupies 20–312 (FVDFQPLGFG…AEMGLQHPYM (293 aa)). ATP contacts are provided by residues 26-34 (LGFGVNGLV) and Lys-49. Asp-149 (proton acceptor) is an active-site residue. Ser-186 is modified (phosphoserine; by PAK1, PAK2 and PAK3). The short motif at 186–188 (SEG) is the SEG motif element. The short motif at 328 to 333 (FRIEDE) is the FRIEDE motif element. Basic and acidic residues-rich tracts occupy residues 373 to 383 (QDASEVQRDPR) and 395 to 413 (VDPRKDSHSSSERFLEQSH). The disordered stretch occupies residues 373-413 (QDASEVQRDPRAGSAPLAEDVQVDPRKDSHSSSERFLEQSH). Position 434 is a phosphoserine (Ser-434). The tract at residues 499-534 (STQGGPEHASPPADDPERRLSASPPGRPAPVDGGAS) is disordered.

The protein belongs to the protein kinase superfamily. CMGC Ser/Thr protein kinase family. MAP kinase subfamily. As to quaternary structure, homodimer. Heterodimer with ERK3/MAPK6. Interacts with (via FRIEDE motif) MAPKAPK5. Requires Mg(2+) as cofactor. Post-translationally, phosphorylated at Ser-186 by PAK1, PAK2 and PAK3 resulting in catalytic activation. Phosphorylated by MAPKAPK5 at other sites. As to expression, high expression in heart and brain.

It is found in the cytoplasm. The protein resides in the nucleus. It carries out the reaction L-seryl-[protein] + ATP = O-phospho-L-seryl-[protein] + ADP + H(+). The enzyme catalyses L-threonyl-[protein] + ATP = O-phospho-L-threonyl-[protein] + ADP + H(+). Its activity is regulated as follows. Activated by phosphorylation at Ser-186. Its function is as follows. Atypical MAPK protein. Phosphorylates microtubule-associated protein 2 (MAP2) and MAPKAPK5. The precise role of the complex formed with MAPKAPK5 is still unclear, but the complex follows a complex set of phosphorylation events: upon interaction with atypical MAPKAPK5, ERK4/MAPK4 is phosphorylated at Ser-186 and then mediates phosphorylation and activation of MAPKAPK5, which in turn phosphorylates ERK4/MAPK4. May promote entry in the cell cycle. This chain is Mitogen-activated protein kinase 4 (MAPK4), found in Homo sapiens (Human).